We begin with the raw amino-acid sequence, 441 residues long: MKMVPRLAVRAWPLCGLLLAALGCVCASGPRTLVLLDNLNVRDTHSLFFRSLKDRGFELTFKTADDPSLSLIKYGEFLYDNLIIFSPSVEDFGGNINVETISAFIDGGGSVLVAASSDIGDPLRELGSECGIEFDEEKTAVIDHHNYDVSDLGQHTLIVADTENLLKAPTIVGKSSLNPILFRGVGMVADPDNPLVLDILTGSSTSYSFFPDKPITQYPHAVGRNTLLIAGLQARNNARVIFSGSLDFFSDAFFNSAVQKAAPGAQRYSQTGNYELAVALSRWVFKEEGVLRVGPVSHHRVGETAPPNAYTVTDLVEYSIVIEQLSNGKWVPFDGDDIQLEFVRIDPFVRTFLKRKGGKYSVQFKLPDVYGVFQFKVDYNRLGYTHLYSSTQVSVRPLQHTQYERFIPSAYPYYASAFSMMAGLFLFSVVFLHMKEKEKSD.

The signal sequence occupies residues 1–28 (MKMVPRLAVRAWPLCGLLLAALGCVCAS). At 29-412 (GPRTLVLLDN…YERFIPSAYP (384 aa)) the chain is on the lumenal side. A helical membrane pass occupies residues 413-432 (YYASAFSMMAGLFLFSVVFL). Over 433-441 (HMKEKEKSD) the chain is Cytoplasmic.

It belongs to the DDOST 48 kDa subunit family. As to quaternary structure, component of the oligosaccharyltransferase (OST) complex. OST exists in two different complex forms which contain common core subunits RPN1, RPN2, OST48, OST4, DAD1 and TMEM258, either STT3A or STT3B as catalytic subunits, and form-specific accessory subunits. STT3A complex assembly occurs through the formation of 3 subcomplexes. Subcomplex 1 contains RPN1 and TMEM258, subcomplex 2 contains the STT3A-specific subunits STT3A, DC2/OSTC, and KCP2 as well as the core subunit OST4, and subcomplex 3 contains RPN2, DAD1, and OST48. The STT3A complex can form stable complexes with the Sec61 complex or with both the Sec61 and TRAP complexes. Interacts with SMIM22.

It localises to the endoplasmic reticulum membrane. The protein operates within protein modification; protein glycosylation. Subunit of the oligosaccharyl transferase (OST) complex that catalyzes the initial transfer of a defined glycan (Glc(3)Man(9)GlcNAc(2) in eukaryotes) from the lipid carrier dolichol-pyrophosphate to an asparagine residue within an Asn-X-Ser/Thr consensus motif in nascent polypeptide chains, the first step in protein N-glycosylation. N-glycosylation occurs cotranslationally and the complex associates with the Sec61 complex at the channel-forming translocon complex that mediates protein translocation across the endoplasmic reticulum (ER). All subunits are required for a maximal enzyme activity. Required for the assembly of both SST3A- and SS3B-containing OST complexes. This is Dolichyl-diphosphooligosaccharide--protein glycosyltransferase 48 kDa subunit from Rattus norvegicus (Rat).